The chain runs to 226 residues: 2-dehydro-3-deoxy-phosphogluconate aldolase (226 aa).

The active-site Proton acceptor is Glu57. Pyruvate contacts are provided by Arg61, Thr85, and Lys145. The active-site Schiff-base intermediate with substrate is Lys145.

The protein belongs to the KHG/KDPG aldolase family. Homotrimer.

The catalysed reaction is 2-dehydro-3-deoxy-6-phospho-D-gluconate = D-glyceraldehyde 3-phosphate + pyruvate. It participates in carbohydrate acid metabolism; 2-dehydro-3-deoxy-D-gluconate degradation; D-glyceraldehyde 3-phosphate and pyruvate from 2-dehydro-3-deoxy-D-gluconate: step 2/2. Involved in the degradation of glucose via the Entner-Doudoroff pathway. Catalyzes the reversible, stereospecific retro-aldol cleavage of 2-keto-3-deoxy-6-phosphogluconate (KDPG) to pyruvate and D-glyceraldehyde-3-phosphate. This chain is 2-dehydro-3-deoxy-phosphogluconate aldolase, found in Pseudomonas putida (Arthrobacter siderocapsulatus).